The following is a 417-amino-acid chain: Biofilm dispersion protein BdlA (417 aa).

The 66-residue stretch at methionine 1–glycine 66 folds into the PAS 1 domain. The 48-residue stretch at glutamate 67–histidine 114 folds into the PAC 1 domain. In terms of domain architecture, PAS 2 spans glutamine 115–glycine 188. A PAC 2 domain is found at valine 191–glutamate 241. One can recognise a Methyl-accepting transducer domain in the interval alanine 242–leucine 417.

Its function is as follows. Essential for biofilm dispersion by sensing environmental cues. May be involved in sensing and transducing signals within cells, resulting in the modulation of c-di-GMP levels, swimming motility and adhesiveness of the bacterial cell surface. The protein is Biofilm dispersion protein BdlA (bdlA) of Pseudomonas aeruginosa (strain ATCC 15692 / DSM 22644 / CIP 104116 / JCM 14847 / LMG 12228 / 1C / PRS 101 / PAO1).